Reading from the N-terminus, the 209-residue chain is Redox-sensing transcriptional repressor Rex (209 aa).

A DNA-binding region (H-T-H motif) is located at residues 16–55 (VYIQVLTGLKRDGVEVISSEKLARACSVNPSQIRKDLAYF). An NAD(+)-binding site is contributed by 90–95 (GVGNLG).

The protein belongs to the transcriptional regulatory Rex family. Homodimer.

It is found in the cytoplasm. Modulates transcription in response to changes in cellular NADH/NAD(+) redox state. The chain is Redox-sensing transcriptional repressor Rex from Maridesulfovibrio salexigens (strain ATCC 14822 / DSM 2638 / NCIMB 8403 / VKM B-1763) (Desulfovibrio salexigens).